A 492-amino-acid polypeptide reads, in one-letter code: Protein KOKOPELLI (492 aa).

2 disordered regions span residues 218 to 354 (VTSP…RNVM) and 394 to 426 (SKFH…QHQG). The segment covering 256 to 270 (QETETFDDDSSETEA) has biased composition (acidic residues). The span at 287–305 (STSQEYSGETGSSSGSEWE) shows a compositional bias: low complexity. The span at 317–336 (ESSYPPQNDDSVSEVSTSPP) shows a compositional bias: polar residues. Composition is skewed to basic and acidic residues over residues 337–348 (HTDRDTSREPGK) and 403–412 (KSKERKRPMS).

As to expression, mostly expressed in pollen and open flowers and, to a lower extent, in closed flowers.

Its function is as follows. Positively regulates reproductive function by facilitating male gametophyte formation and double fertilization. This chain is Protein KOKOPELLI, found in Arabidopsis thaliana (Mouse-ear cress).